The chain runs to 637 residues: Glutamate--cysteine ligase catalytic subunit (637 aa).

M1 carries the N-acetylmethionine modification. A phosphoserine mark is found at S5 and S8.

This sequence belongs to the glutamate--cysteine ligase type 3 family. In terms of assembly, heterodimer of a catalytic heavy chain and a regulatory light chain. As to expression, most abundant in kidney. Also found in liver and testis.

It carries out the reaction L-cysteine + L-glutamate + ATP = gamma-L-glutamyl-L-cysteine + ADP + phosphate + H(+). It catalyses the reaction (2S)-2-aminobutanoate + L-glutamate + ATP = gamma-L-glutamyl-(2S)-2-aminobutanoate + ADP + phosphate + H(+). It functions in the pathway sulfur metabolism; glutathione biosynthesis; glutathione from L-cysteine and L-glutamate: step 1/2. With respect to regulation, feedback inhibition by glutathione. Functionally, catalyzes the ATP-dependent ligation of L-glutamate and L-cysteine and participates in the first and rate-limiting step in glutathione biosynthesis. In Rattus norvegicus (Rat), this protein is Glutamate--cysteine ligase catalytic subunit.